Here is a 234-residue protein sequence, read N- to C-terminus: Large ribosomal subunit protein uL1 (234 aa).

This sequence belongs to the universal ribosomal protein uL1 family. Part of the 50S ribosomal subunit.

In terms of biological role, binds directly to 23S rRNA. The L1 stalk is quite mobile in the ribosome, and is involved in E site tRNA release. Functionally, protein L1 is also a translational repressor protein, it controls the translation of the L11 operon by binding to its mRNA. This chain is Large ribosomal subunit protein uL1, found in Anaeromyxobacter sp. (strain Fw109-5).